A 497-amino-acid chain; its full sequence is MSDLFTTIETPVIKYEQPLGLFINNEFVKGVEGKTFQVINPSNEKVITSVHEATEKDVDVAVAAARAAFEGPWRQVTPSERGILINKLADLMERDIDTLAAIESLDNGKAFTMAKVDLANSIGCLRYYAGWADKIHGQTIDTNPETLTYTRHEPVGVCGQIIPWNFPLLMWSWKIGPAVAAGNTVVLKTAEQTPLSALYAAKLIKEAGFPAGVINVISGFGRTAGAAISSHMDIDKVAFTGSTLVGRTILQAAAKSNLKKVTLELGGKSPNIVFDDADIDNAISWANFGIFFNHGQCCCAGSRILVQEGIYDKFVARFKERAQKNKVGNPFEQDTFQGPQVSQLQFDRIMEYINHGKKAGATVATGGDRHGNEGYFIQPTVFTDVTSDMKIAQEEIFGPVVTIQKFKDEAEAIKIGNSTDYGLAAAVHTKNVNTAIRVSNALKAGTVWINNYNMISYQAPFGGFKQSGLGRELGSYALENYTQIKTVHYRLGDALFA.

241 to 246 provides a ligand contact to NAD(+); it reads GSTLVG. The active-site Proton acceptor is glutamate 264. The active-site Nucleophile is the cysteine 298.

The protein belongs to the aldehyde dehydrogenase family.

The enzyme catalyses an aldehyde + NAD(+) + H2O = a carboxylate + NADH + 2 H(+). Its pathway is alcohol metabolism; ethanol degradation; acetate from ethanol: step 2/2. The polypeptide is Aldehyde dehydrogenase (aldA) (Emericella nidulans (strain FGSC A4 / ATCC 38163 / CBS 112.46 / NRRL 194 / M139) (Aspergillus nidulans)).